We begin with the raw amino-acid sequence, 1827 residues long: Phenolphthiocerol/phthiocerol polyketide synthase subunit C (1827 aa).

In terms of domain architecture, Ketosynthase family 3 (KS3) spans 35–461; that stretch reads CEPVAVVGIG…GTNAHVVVEQ (427 aa). Catalysis depends on for beta-ketoacyl synthase activity residues Cys-207, His-342, and His-383. Residues 566–876 are acyltransferase; sequence VFVYSGQGSQ…LAAVGVAASE (311 aa). Residue Ser-654 is the For malonyltransferase activity of the active site. The interval 910–1037 is N-terminal hotdog fold; sequence HPLLGAHIEM…AKVEQSPREC (128 aa). The segment at 910-1076 is dehydratase; that stretch reads HPLLGAHIEM…QHHGPAFAAL (167 aa). The PKS/mFAS DH domain occupies 910 to 1198; that stretch reads HPLLGAHIEM…LRRVERRAVP (289 aa). Catalysis depends on His-942, which acts as the Proton acceptor; for dehydratase activity. The tract at residues 1050 to 1198 is C-terminal hotdog fold; sequence GTTVSPADFY…LRRVERRAVP (149 aa). The Proton donor; for dehydratase activity role is filled by Asp-1111. Residues 1439-1617 form a beta-ketoacyl reductase region; that stretch reads ASYVVTGGLG…VINWGPWSEV (179 aa). 1440–1485 is a binding site for NADP(+); that stretch reads SYVVTGGLGGLGLVVARWLVDRGAGRVVLGGRSDPTDEQCNVLAEL. Residues 1706–1785 form the Carrier domain; the sequence is RAVTERMCAR…DLTADLMRQL (80 aa). O-(pantetheine 4'-phosphoryl)serine is present on Ser-1745.

NADP(+) serves as cofactor. The cofactor is pantetheine 4'-phosphate.

The enzyme catalyses icosanoyl-[(phenol)carboxyphthiodiolenone synthase] + 2 (S)-methylmalonyl-CoA + 3 malonyl-CoA + 5 NADPH + 10 H(+) = C32-carboxyphthiodiolenone-[(phenol)carboxyphthiodiolenone synthase] + 5 CO2 + 5 NADP(+) + 5 CoA + 2 H2O. The catalysed reaction is docosanoyl-[(phenol)carboxyphthiodiolenone synthase] + 2 (S)-methylmalonyl-CoA + 3 malonyl-CoA + 5 NADPH + 10 H(+) = C34-carboxyphthiodiolenone-[(phenol)carboxyphthiodiolenone synthase] + 5 CO2 + 5 NADP(+) + 5 CoA + 2 H2O. It catalyses the reaction 17-(4-hydroxyphenyl)heptadecanoyl-[(phenol)carboxyphthiodiolenone synthase] + 2 (S)-methylmalonyl-CoA + 3 malonyl-CoA + 5 NADPH + 10 H(+) = C35-(phenol)carboxyphthiodiolenone-[(phenol)carboxyphthiodiolenone synthase] + 5 CO2 + 5 NADP(+) + 5 CoA + 2 H2O. It carries out the reaction 19-(4-hydroxyphenyl)nonadecanoyl-[(phenol)carboxyphthiodiolenone synthase] + 2 (S)-methylmalonyl-CoA + 3 malonyl-CoA + 5 NADPH + 10 H(+) = C37-(phenol)carboxyphthiodiolenone-[(phenol)carboxyphthiodiolenone synthase] + 5 CO2 + 5 NADP(+) + 5 CoA + 2 H2O. It participates in lipid metabolism; fatty acid biosynthesis. Its function is as follows. Part of the PpsABCDE complex involved in the biosynthesis of the lipid core common to phthiocerols and phenolphthiocerols by successive additions of malonyl-CoA or methylmalonyl-CoA extender units. PpsA can accept as substrate the activated forms of either icosanoyl (C20), docosanoyl (C22) or lignoceroyl (C24) groups from FadD26, or a (4-hydroxyphenyl)-C17 or (4-hydroxyphenyl)-C19 fatty acyl from FadD29. PpsA initiates the biosynthesis and extends its substrate using a malonyl-CoA extender unit. The PpsB and PpsC proteins add the second and third malonyl-CoA extender units. PpsD adds an (R)-methylmalonyl unit and PpsE adds a second (R)-methylmalonyl unit. The incorporation of the methylmalonyl units results in formation of two branched methyl groups in the elongated product. The polypeptide is Phenolphthiocerol/phthiocerol polyketide synthase subunit C (ppsD) (Mycobacterium bovis (strain ATCC BAA-935 / AF2122/97)).